The chain runs to 500 residues: MQKPSLSQDLIWILKSVQSRRSTKGFLQKHSSLKDGSPNKKSFAQPISSSFLNRISITKIDDVDSLSDNTLYGIGRSINSLARLGIQSVIVPTSNPIGMTSPFKYLENGTVVAKKRKLSIFEELQQQQNRVIRVSEIFSKAGVLTRPSYSSVCQLGPEGPSVENVQGIFQALSSLYTVIVPSSILMPNVIEVPIDGNEVLAGLTYSLHKPNFGFWVDRIVILDKNGGMPCSKRQTGSSHVLINLAQEFDELAKTLPPYHRKNLILVRRCLKMLPDDASALITTPEDAMLTNPVLDKNPLIHNVLTDRSIISCSLPRDRSPITKTTVLRSGVPVYTFLGPKCLTDGSVSWERLWVLINDSFKRTLDMDAYLDRLKNSLAAVIIAGDYLGTAIVTYEQPDGTTNEKVPYLDKLAVSQGAQGSAAISDVMFNVMTDLFPKELIWRSRLTNPVNKWYFERSVGSLKSSKTPWKLFWTGDSHVRNLDRVNQYMSVIDKIQPTWLN.

A mitochondrion-targeting transit peptide spans 1 to 19 (MQKPSLSQDLIWILKSVQS). Positions 336–496 (FLGPKCLTDG…YMSVIDKIQP (161 aa)) constitute an N-acetyltransferase domain.

This sequence belongs to the acetyltransferase family.

It localises to the mitochondrion. The enzyme catalyses L-glutamate + acetyl-CoA = N-acetyl-L-glutamate + CoA + H(+). It participates in amino-acid biosynthesis; L-arginine biosynthesis; N(2)-acetyl-L-ornithine from L-glutamate: step 1/4. N-acetylglutamate synthase involved in arginine biosynthesis. This is Amino-acid acetyltransferase, mitochondrial (arg6) from Schizosaccharomyces pombe (strain 972 / ATCC 24843) (Fission yeast).